A 432-amino-acid chain; its full sequence is N-acylneuraminate cytidylyltransferase (432 aa).

An N-acetylmethionine modification is found at Met-1. The disordered stretch occupies residues 1–38 (MDALEKGAATSGPAPRGRPSRGRPPKLQRSRGAGRGLE). Positions 15–31 (PRGRPSRGRPPKLQRSR) match the BC1 motif motif. A compositionally biased stretch (basic residues) spans 18–29 (RPSRGRPPKLQR). Arg-35 and Arg-50 each carry omega-N-methylarginine. Positions 50, 60, 109, 118, 120, and 141 each coordinate substrate. Positions 198-204 (KRPRRQD) match the BC2 motif motif. The active site involves Arg-199. The BC3 motif signature appears at 267–274 (KEKLKEIK).

It belongs to the CMP-NeuNAc synthase family. As to quaternary structure, homotetramer; the active enzyme is formed by a dimer of dimers. As to expression, liver.

It localises to the nucleus. It catalyses the reaction an N-acylneuraminate + CTP = a CMP-N-acyl-beta-neuraminate + diphosphate. It functions in the pathway amino-sugar metabolism; N-acetylneuraminate metabolism. In terms of biological role, catalyzes the activation of N-acetylneuraminic acid (NeuNAc) to cytidine 5'-monophosphate N-acetylneuraminic acid (CMP-NeuNAc), a substrate required for the addition of sialic acid. Has some activity toward NeuNAc, N-glycolylneuraminic acid (Neu5Gc) or 2-keto-3-deoxy-D-glycero-D-galacto-nononic acid (KDN). The polypeptide is N-acylneuraminate cytidylyltransferase (Cmas) (Rattus norvegicus (Rat)).